We begin with the raw amino-acid sequence, 557 residues long: Aspartate--tRNA ligase (557 aa).

Glu-168 contributes to the L-aspartate binding site. Residues 192–195 are aspartate; sequence QIYK. Arg-214 contacts L-aspartate. ATP is bound by residues 214 to 216 and Gln-223; that span reads RDE. Residue His-423 coordinates L-aspartate. An ATP-binding site is contributed by Glu-457. Arg-464 contacts L-aspartate. 505–508 is an ATP binding site; it reads GLDR.

It belongs to the class-II aminoacyl-tRNA synthetase family. Type 1 subfamily. In terms of assembly, homodimer.

The protein resides in the cytoplasm. It carries out the reaction tRNA(Asp) + L-aspartate + ATP = L-aspartyl-tRNA(Asp) + AMP + diphosphate. Catalyzes the attachment of L-aspartate to tRNA(Asp) in a two-step reaction: L-aspartate is first activated by ATP to form Asp-AMP and then transferred to the acceptor end of tRNA(Asp). This is Aspartate--tRNA ligase from Mycoplasma pneumoniae (strain ATCC 29342 / M129 / Subtype 1) (Mycoplasmoides pneumoniae).